We begin with the raw amino-acid sequence, 214 residues long: Adenylate kinase (214 aa).

10-15 (GAGKGT) is a binding site for ATP. The segment at 30–59 (STGDMLRAAIKAGTELGKQAKSVIDAGQLV) is NMP. Residues Thr-31, Arg-36, 57–59 (QLV), 85–88 (GFPR), and Gln-92 each bind AMP. The tract at residues 122–159 (GRRAHLASGRTYHNVYNPPKVEGKDDVTGEDLVIREDD) is LID. ATP is bound by residues Arg-123 and 132–133 (TY). AMP contacts are provided by Arg-156 and Arg-167. Lys-200 contributes to the ATP binding site.

This sequence belongs to the adenylate kinase family. In terms of assembly, monomer.

The protein localises to the cytoplasm. The enzyme catalyses AMP + ATP = 2 ADP. It functions in the pathway purine metabolism; AMP biosynthesis via salvage pathway; AMP from ADP: step 1/1. In terms of biological role, catalyzes the reversible transfer of the terminal phosphate group between ATP and AMP. Plays an important role in cellular energy homeostasis and in adenine nucleotide metabolism. The protein is Adenylate kinase of Photobacterium profundum (strain SS9).